The following is a 79-amino-acid chain: Beta-defensin 15 (79 aa).

Positions 1–20 are cleaved as a signal peptide; sequence MKTFLFLFAVFFFLDPAKNA. Cystine bridges form between C26–C53, C33–C47, and C37–C54.

The protein belongs to the beta-defensin family.

The protein resides in the secreted. Functionally, has antibacterial activity. This chain is Beta-defensin 15 (Defb15), found in Rattus norvegicus (Rat).